The following is a 137-amino-acid chain: Small ribosomal subunit protein uS12 (137 aa).

A disordered region spans residues 1 to 57 (MPTINQLVRKPRRAQVTKSKSPAMNVGYNSRKKVQTKLASPQKRGVATRVGTMTPKK). The residue at position 102 (aspartate 102) is a 3-methylthioaspartic acid.

Belongs to the universal ribosomal protein uS12 family. As to quaternary structure, part of the 30S ribosomal subunit. Contacts proteins S8 and S17. May interact with IF1 in the 30S initiation complex.

In terms of biological role, with S4 and S5 plays an important role in translational accuracy. Its function is as follows. Interacts with and stabilizes bases of the 16S rRNA that are involved in tRNA selection in the A site and with the mRNA backbone. Located at the interface of the 30S and 50S subunits, it traverses the body of the 30S subunit contacting proteins on the other side and probably holding the rRNA structure together. The combined cluster of proteins S8, S12 and S17 appears to hold together the shoulder and platform of the 30S subunit. The chain is Small ribosomal subunit protein uS12 from Lactococcus lactis subsp. lactis (strain IL1403) (Streptococcus lactis).